A 359-amino-acid polypeptide reads, in one-letter code: Small ribosomal subunit protein mS22 (359 aa).

Belongs to the mitochondrion-specific ribosomal protein mS22 family. In terms of assembly, component of the mitochondrial ribosome small subunit (28S) which comprises a 12S rRNA and about 30 distinct proteins.

The protein resides in the mitochondrion. In Bos taurus (Bovine), this protein is Small ribosomal subunit protein mS22 (MRPS22).